The sequence spans 170 residues: Odorant-binding protein 2b (170 aa).

The first 15 residues, 1–15 (MKTLFLGVTLGLAAA), serve as a signal peptide directing secretion. A disulfide bridge links C74 with C166.

It belongs to the calycin superfamily. Lipocalin family. In terms of tissue distribution, strongly expressed in genital sphere organs such as the prostate and mammary glands.

The protein localises to the secreted. Probably binds and transports small hydrophobic volatile molecules. The sequence is that of Odorant-binding protein 2b (OBP2B) from Homo sapiens (Human).